Here is a 466-residue protein sequence, read N- to C-terminus: Asparagine--tRNA ligase (466 aa).

Belongs to the class-II aminoacyl-tRNA synthetase family. In terms of assembly, homodimer.

The protein resides in the cytoplasm. The enzyme catalyses tRNA(Asn) + L-asparagine + ATP = L-asparaginyl-tRNA(Asn) + AMP + diphosphate + H(+). In Shewanella sediminis (strain HAW-EB3), this protein is Asparagine--tRNA ligase.